A 377-amino-acid chain; its full sequence is Molybdenum import ATP-binding protein ModC (377 aa).

Residues 17-254 enclose the ABC transporter domain; sequence ITGDEAIRAR…LDLPFAHDED (238 aa). Residue 52–59 participates in ATP binding; the sequence is GHSGSGKT. The region spanning 313 to 377 is the Mop domain; it reads DSSILNVLPA…AQVKGVALLR (65 aa).

This sequence belongs to the ABC transporter superfamily. Molybdate importer (TC 3.A.1.8) family. The complex is composed of two ATP-binding proteins (ModC), two transmembrane proteins (ModB) and a solute-binding protein (ModA).

It is found in the cell inner membrane. The enzyme catalyses molybdate(out) + ATP + H2O = molybdate(in) + ADP + phosphate + H(+). In terms of biological role, part of the ABC transporter complex ModABC involved in molybdenum import. Responsible for energy coupling to the transport system. The sequence is that of Molybdenum import ATP-binding protein ModC from Aromatoleum aromaticum (strain DSM 19018 / LMG 30748 / EbN1) (Azoarcus sp. (strain EbN1)).